A 168-amino-acid polypeptide reads, in one-letter code: Phosphopantetheine adenylyltransferase (168 aa).

Thr10 serves as a coordination point for substrate. ATP is bound by residues 10-11 and His18; that span reads TF. Substrate is bound by residues Lys42, Leu74, and Arg88. ATP contacts are provided by residues 89 to 91, Glu99, and 124 to 130; these read GLR and NSFISST.

It belongs to the bacterial CoaD family. Homohexamer. It depends on Mg(2+) as a cofactor.

It localises to the cytoplasm. The catalysed reaction is (R)-4'-phosphopantetheine + ATP + H(+) = 3'-dephospho-CoA + diphosphate. It functions in the pathway cofactor biosynthesis; coenzyme A biosynthesis; CoA from (R)-pantothenate: step 4/5. Reversibly transfers an adenylyl group from ATP to 4'-phosphopantetheine, yielding dephospho-CoA (dPCoA) and pyrophosphate. This chain is Phosphopantetheine adenylyltransferase, found in Shewanella frigidimarina (strain NCIMB 400).